Reading from the N-terminus, the 536-residue chain is Cytochrome P450 monooxygenase pbrC (536 aa).

A helical transmembrane segment spans residues 20-39; the sequence is VMLPALVGFAFLIYQAFFAI. Residue Cys-479 participates in heme binding.

This sequence belongs to the cytochrome P450 family. It depends on heme as a cofactor.

The protein resides in the membrane. It participates in secondary metabolite biosynthesis; terpenoid biosynthesis. Its function is as follows. Cytochrome P450 monooxygenase; part of the gene cluster that mediates the biosynthesis of the sesquiterpenoid aspterric acid (AA), an inhibitor of dihydroxy-acid dehydratase (DHAD) effective as an herbicide. PbrC catalyzes the third and last step within the pathway and converts the alpha-epoxy carboxylate intermediate produced by the cytochrome P450 monooxygenase pbrB from (-)daucane into the tricyclic aspterric acid. This chain is Cytochrome P450 monooxygenase pbrC, found in Penicillium brasilianum.